Here is a 716-residue protein sequence, read N- to C-terminus: Fatty acid oxidation complex subunit alpha (716 aa).

An enoyl-CoA hydratase/isomerase region spans residues 1 to 189 (MIYQSPTIQV…KVGAVDAVVA (189 aa)). Position 296 (D296) interacts with substrate. Residues 311 to 716 (KDVKSAAVLG…AANNGSYYQA (406 aa)) form a 3-hydroxyacyl-CoA dehydrogenase region. Residues M324, D343, 400-402 (VVE), K407, and S429 contribute to the NAD(+) site. The For 3-hydroxyacyl-CoA dehydrogenase activity role is filled by H450. N453 lines the NAD(+) pocket. N500 and Y660 together coordinate substrate.

The protein in the N-terminal section; belongs to the enoyl-CoA hydratase/isomerase family. In the C-terminal section; belongs to the 3-hydroxyacyl-CoA dehydrogenase family. In terms of assembly, heterotetramer of two alpha chains (FadB) and two beta chains (FadA).

The catalysed reaction is a (3S)-3-hydroxyacyl-CoA + NAD(+) = a 3-oxoacyl-CoA + NADH + H(+). It catalyses the reaction a (3S)-3-hydroxyacyl-CoA = a (2E)-enoyl-CoA + H2O. It carries out the reaction a 4-saturated-(3S)-3-hydroxyacyl-CoA = a (3E)-enoyl-CoA + H2O. The enzyme catalyses (3S)-3-hydroxybutanoyl-CoA = (3R)-3-hydroxybutanoyl-CoA. The catalysed reaction is a (3Z)-enoyl-CoA = a 4-saturated (2E)-enoyl-CoA. It catalyses the reaction a (3E)-enoyl-CoA = a 4-saturated (2E)-enoyl-CoA. It functions in the pathway lipid metabolism; fatty acid beta-oxidation. In terms of biological role, involved in the aerobic and anaerobic degradation of long-chain fatty acids via beta-oxidation cycle. Catalyzes the formation of 3-oxoacyl-CoA from enoyl-CoA via L-3-hydroxyacyl-CoA. It can also use D-3-hydroxyacyl-CoA and cis-3-enoyl-CoA as substrate. This Shewanella sp. (strain ANA-3) protein is Fatty acid oxidation complex subunit alpha.